A 706-amino-acid polypeptide reads, in one-letter code: Elongation factor G (706 aa).

Positions glutamate 8–threonine 297 constitute a tr-type G domain. GTP is bound by residues alanine 17–threonine 24, aspartate 96–histidine 100, and asparagine 150–aspartate 153.

Belongs to the TRAFAC class translation factor GTPase superfamily. Classic translation factor GTPase family. EF-G/EF-2 subfamily.

Its subcellular location is the cytoplasm. Its function is as follows. Catalyzes the GTP-dependent ribosomal translocation step during translation elongation. During this step, the ribosome changes from the pre-translocational (PRE) to the post-translocational (POST) state as the newly formed A-site-bound peptidyl-tRNA and P-site-bound deacylated tRNA move to the P and E sites, respectively. Catalyzes the coordinated movement of the two tRNA molecules, the mRNA and conformational changes in the ribosome. The chain is Elongation factor G from Cyanothece sp. (strain PCC 7425 / ATCC 29141).